The sequence spans 513 residues: MFDIYDYSPRLVALGLIAATIIIYSFTLTVYRLFFHPLARIPGPKLCAITGWYEIFWDVLVGGQFTFKIEEWHKTYGPVMRIGPNEVHFNDPDFYNELYPTIGATYEKPAQWRWRFGCGTAIFDTIGHEHHAQRKAPVAAFFSRQKILQFSGFIQDQTDILVKRIRDDHRGQVICANEAFDALTMDIIGYYAFGLSYNSLQYPGFKAPYRNVTADIARMVHVGAHFPWVFTILNALPEKYITRLLPPMSKIFMFRKEISSQIRRIKDNKEYLDKNVNEHRTVFHEILNSNQPACELNEGRIYHEALSLVGAALETSKRTTALAVYYILATPGVEDNLRAELTAAMPDKTKNLSVPELEALPYLNAVIKEALRLAIGVSQRMRRYSPTETITYKDYTIPPNTVFGMCHWEQLRDARIWDRPTEFLPERWLAEQPLALNGQPLNKYFVPFHRGPRMCLGKEFGMAQLNIGLATLFRQDDIKLELYETDRKDVDVVADFFVPLTVKESQGVRVLVK.

The helical transmembrane segment at L11 to Y31 threads the bilayer. Residues N211 and N351 are each glycosylated (N-linked (GlcNAc...) asparagine). C455 lines the heme pocket.

It belongs to the cytochrome P450 family. The cofactor is heme.

The protein localises to the membrane. The protein operates within mycotoxin biosynthesis. Its function is as follows. Cytochrome P450 monooxygenase; part of the gene cluster that mediates the biosynthesis of brefeldin A (BFA), a protein transport inhibitor that shows antiviral, antifungal, and antitumor properties. The proposed biosynthesis of BFA involves formation of an acyclic polyketide chain that is differentially tailored throughout the backbone. The highly reducing polyketide synthase Bref-PKS is proposed to synthesize the precisely reduced octaketide precursor, which could then be directly offloaded by the thiohydrolase enzyme Bref-TH followed by a cytochrome P450 monooxygenase-mediated formation of the cyclopentane ring and macrocyclization to afford 7-deoxy BFA. Alternatively, the first ring annulation can also occur on the ACP-tethered intermediate before the thiohydrolase release and lactonization. The C7-hydroxylation by another cytochrome P450 monooxygenase is believed to be the final step in the process to obtain the final structure of BFA. In addition to the HRPKS Bref-PKS and the thiohydrolase Bref-TH, the brefeldin A biosynthesis cluster contains 4 cytochrome p450 monooxygenases (called orf3 to orf6), as well a the probable cluster-specific transcription regulator orf8. In Eupenicillium brefeldianum (Penicillium brefeldianum), this protein is Cytochrome P450 monooxygenase orf3.